A 157-amino-acid chain; its full sequence is Thioredoxin 2 (157 aa).

A signal peptide spans 1-22 (MKHILALVVFIISFFCFKDVNC). Positions 46 to 157 (LRMYNKMPRL…ELTSTIRKHL (112 aa)) constitute a Thioredoxin domain. Catalysis depends on nucleophile residues Cys82 and Cys85. Residues Cys82 and Cys85 are joined by a disulfide bond.

The protein belongs to the thioredoxin family. Monomer. Component of the translocon PTEX complex composed of HSP101, EXP2, PTEX150, PTEX88 and TRX2. Post-translationally, the disulfide bond between Cys-82 and Cys-85 acts as a redox-active center and is reduced by thioredoxin reductase TRXR.

Its function is as follows. Participates in various redox reactions through the reversible oxidation of its active center dithiol to a disulfide and catalyzes dithiol-disulfide exchange reactions. As part of the translocon PTEX complex, plays a role in the export of parasite proteins into the host erythrocyte. The translocon PTEX complex is a multi-protein machinery resident in the parasite parasitophorous vacuolar membrane, responsible for protein secretion into host cells. May contribute to the unfolding of proteins containing the PEXEL localization motif before their passage through the translocon or regulate the PTEX complex function. The polypeptide is Thioredoxin 2 (Plasmodium berghei (strain Anka)).